The sequence spans 177 residues: Adenine phosphoribosyltransferase (177 aa).

This sequence belongs to the purine/pyrimidine phosphoribosyltransferase family. As to quaternary structure, homodimer.

The protein resides in the cytoplasm. The enzyme catalyses AMP + diphosphate = 5-phospho-alpha-D-ribose 1-diphosphate + adenine. The protein operates within purine metabolism; AMP biosynthesis via salvage pathway; AMP from adenine: step 1/1. Its function is as follows. Catalyzes a salvage reaction resulting in the formation of AMP, that is energically less costly than de novo synthesis. This is Adenine phosphoribosyltransferase from Chlorobium phaeovibrioides (strain DSM 265 / 1930) (Prosthecochloris vibrioformis (strain DSM 265)).